Here is a 257-residue protein sequence, read N- to C-terminus: UPF0246 protein RSKD131_2757 (257 aa).

The protein belongs to the UPF0246 family.

The protein is UPF0246 protein RSKD131_2757 of Cereibacter sphaeroides (strain KD131 / KCTC 12085) (Rhodobacter sphaeroides).